The sequence spans 138 residues: Sporulation-specific protein 13 (138 aa).

The segment covering 1–11 has biased composition (polar residues); that stretch reads MMSNSQISKLF. The disordered stretch occupies residues 1–31; that stretch reads MMSNSQISKLFSSISNKENSNENALKESTNK. Residues 12–23 are compositionally biased toward low complexity; it reads SSISNKENSNEN. Residues 16–104 adopt a coiled-coil conformation; sequence NKENSNENAL…KRELDYLRAK (89 aa).

As to quaternary structure, interacts with spo2.

The protein resides in the cytoplasm. It localises to the cytoskeleton. It is found in the microtubule organizing center. Its subcellular location is the spindle pole body. In terms of biological role, involved in sporulation. Plays a significant role in modification of the spindle pole body prior to spore formation and is required for initiating forespore membrane formation. The chain is Sporulation-specific protein 13 (spo13) from Schizosaccharomyces pombe (strain 972 / ATCC 24843) (Fission yeast).